A 170-amino-acid chain; its full sequence is Transmembrane protein 252 (170 aa).

The next 2 helical transmembrane spans lie at 8 to 28 and 40 to 60; these read ILCA…AFFI and LIAA…GIFW. The tract at residues 112-147 is disordered; that stretch reads CPAEREASGIPPPLYTETGLEFQDGNDSHPEAPPSY.

Its subcellular location is the membrane. In Pongo abelii (Sumatran orangutan), this protein is Transmembrane protein 252 (TMEM252).